A 445-amino-acid polypeptide reads, in one-letter code: Argininosuccinate synthase (445 aa).

ATP-binding positions include 17–25 (AFSGGLDTS) and A43. Y99 serves as a coordination point for L-citrulline. ATP-binding residues include G129 and T131. Positions 131, 135, and 136 each coordinate L-aspartate. L-citrulline is bound at residue N135. D136 contributes to the ATP binding site. L-citrulline is bound by residues R139 and S192. Residue D194 participates in ATP binding. L-citrulline contacts are provided by T201, E203, and E280.

It belongs to the argininosuccinate synthase family. Type 2 subfamily. As to quaternary structure, homotetramer.

Its subcellular location is the cytoplasm. It catalyses the reaction L-citrulline + L-aspartate + ATP = 2-(N(omega)-L-arginino)succinate + AMP + diphosphate + H(+). Its pathway is amino-acid biosynthesis; L-arginine biosynthesis; L-arginine from L-ornithine and carbamoyl phosphate: step 2/3. The sequence is that of Argininosuccinate synthase from Herminiimonas arsenicoxydans.